The following is a 495-amino-acid chain: 3-octaprenyl-4-hydroxybenzoate carboxy-lyase (495 aa).

Asn172 lines the Mn(2+) pocket. Prenylated FMN-binding positions include Ile175 to Arg177, Arg189 to Leu191, and Arg194 to Gly195. Position 238 (Glu238) interacts with Mn(2+). The active-site Proton donor is the Asp287.

This sequence belongs to the UbiD family. Homohexamer. It depends on prenylated FMN as a cofactor. Mn(2+) serves as cofactor.

Its subcellular location is the cell membrane. It catalyses the reaction a 4-hydroxy-3-(all-trans-polyprenyl)benzoate + H(+) = a 2-(all-trans-polyprenyl)phenol + CO2. It functions in the pathway cofactor biosynthesis; ubiquinone biosynthesis. Functionally, catalyzes the decarboxylation of 3-octaprenyl-4-hydroxy benzoate to 2-octaprenylphenol, an intermediate step in ubiquinone biosynthesis. In Yersinia pseudotuberculosis serotype O:1b (strain IP 31758), this protein is 3-octaprenyl-4-hydroxybenzoate carboxy-lyase.